A 124-amino-acid chain; its full sequence is Large ribosomal subunit protein bL12 (124 aa).

The protein belongs to the bacterial ribosomal protein bL12 family. As to quaternary structure, homodimer. Part of the ribosomal stalk of the 50S ribosomal subunit. Forms a multimeric L10(L12)X complex, where L10 forms an elongated spine to which 2 to 4 L12 dimers bind in a sequential fashion. Binds GTP-bound translation factors.

Its function is as follows. Forms part of the ribosomal stalk which helps the ribosome interact with GTP-bound translation factors. Is thus essential for accurate translation. In Janthinobacterium sp. (strain Marseille) (Minibacterium massiliensis), this protein is Large ribosomal subunit protein bL12.